A 134-amino-acid polypeptide reads, in one-letter code: Large ribosomal subunit protein uL16c (134 aa).

The protein belongs to the universal ribosomal protein uL16 family. As to quaternary structure, part of the 50S ribosomal subunit.

It localises to the plastid. Its subcellular location is the chloroplast. The protein is Large ribosomal subunit protein uL16c of Pinus thunbergii (Japanese black pine).